The following is an 89-amino-acid chain: 10 kDa fusion protein (89 aa).

Residues 1-29 (MDENDGENLLTQPDDTGNSTNGVYAAGAP) form a disordered region. Polar residues predominate over residues 9–22 (LLTQPDDTGNSTNG). N18 carries an N-linked (GlcNAc...) asparagine; by host glycan.

This sequence belongs to the poxviruses fusion protein family. As to quaternary structure, homotrimer, covalently linked.

The protein resides in the virion membrane. In Capra hircus (Goat), this protein is 10 kDa fusion protein.